The chain runs to 620 residues: Somatic embryogenesis receptor kinase 4 (620 aa).

The first 33 residues, 1 to 33 (MTSSKMEQRSLLCFLYLLLLFNFTLRVAGNAEG), serve as a signal peptide directing secretion. Over 34-234 (DALTQLKNSL…GGQMTAAIAG (201 aa)) the chain is Extracellular. LRR repeat units follow at residues 100-122 (NLQY…LGDL), 124-146 (ELVS…LGKL), 148-170 (KLRF…LTSV), 171-193 (QLQV…GSFS), and 194-215 (LFTP…PPTS). Asn110 is a glycosylation site (N-linked (GlcNAc...) asparagine). N-linked (GlcNAc...) asparagine glycosylation is found at Asn156, Asn189, and Asn202. Residues 205 to 227 (LTDLPEPPPTSTSPTPPPPSGGQ) form a disordered region. Residues 209–224 (PEPPPTSTSPTPPPPS) are compositionally biased toward pro residues. Residues 235–255 (GVAAGAALLFAVPAIAFAWWL) traverse the membrane as a helical segment. Residues 256–620 (RRKPQDHFFD…IENDYPSGPR (365 aa)) are Cytoplasmic-facing. Thr291 bears the Phosphothreonine mark. The region spanning 294–591 (FSNKNVLGRG…KEEMPIHDFN (298 aa)) is the Protein kinase domain. Ser295 is modified (phosphoserine). ATP is bound by residues 300–308 (LGRGGFGKV) and Lys322. 2 positions are modified to phosphoserine: Ser375 and Ser378. Asp421 (proton acceptor) is an active-site residue. Thr454, Thr455, and Thr460 each carry phosphothreonine. The residue at position 468 (Tyr468) is a Phosphotyrosine. At Ser470 the chain carries Phosphoserine. Thr471 is modified (phosphothreonine). Ser475 carries the post-translational modification Phosphoserine. At Thr551 the chain carries Phosphothreonine.

The protein belongs to the protein kinase superfamily. Ser/Thr protein kinase family. As to quaternary structure, interacts with the EF-Tu receptor EFR and FLS2 in a specific ligand-induced manner. Interacts with TMK4/BARK1. Interacts with ERECTA in a EPF2-induced manner. Interacts with ERL1 in a EPF1-induced manner. Interacts with TMM. Forms a complex with MIK2 in response to SCOOP12 perception. Autophosphorylated on Thr and Tyr residues.

It is found in the cell membrane. The enzyme catalyses L-seryl-[protein] + ATP = O-phospho-L-seryl-[protein] + ADP + H(+). It carries out the reaction L-threonyl-[protein] + ATP = O-phospho-L-threonyl-[protein] + ADP + H(+). It catalyses the reaction L-tyrosyl-[protein] + ATP = O-phospho-L-tyrosyl-[protein] + ADP + H(+). Its function is as follows. Dual specificity kinase acting on both serine/threonine- and tyrosine-containing substrates. Positively regulates the BR-dependent plant growth pathway and negatively regulates the BR-independent cell-death pathway. Required during SCOOP small peptides (e.g. SCOOP10 and SCOOP12) perception and signaling; associates with MIK2 as a coreceptor upon MIK2 perception of SCOOP peptides, and relays the signaling through the activation of receptor-like cytosolic kinases (RLCKs) BIK1 and PBL1. This chain is Somatic embryogenesis receptor kinase 4, found in Arabidopsis thaliana (Mouse-ear cress).